A 115-amino-acid polypeptide reads, in one-letter code: MHIKLGDKVAIIAGKNRFVTDENGKKIIKTGKILKIFHKQQKVLVEGINIVFKHKAPLKDEDKGNIIKQEAPIHISNVALIDSLKNVPTRVGYRIENNKKVRYFKKSGTIIEDLN.

This sequence belongs to the universal ribosomal protein uL24 family. As to quaternary structure, part of the 50S ribosomal subunit.

Functionally, one of two assembly initiator proteins, it binds directly to the 5'-end of the 23S rRNA, where it nucleates assembly of the 50S subunit. One of the proteins that surrounds the polypeptide exit tunnel on the outside of the subunit. The polypeptide is Large ribosomal subunit protein uL24 (Phytoplasma mali (strain AT)).